An 81-amino-acid chain; its full sequence is Neuronatin (81 aa).

The protein belongs to the neuronatin family.

Functionally, may participate in the maintenance of segment identity in the hindbrain and pituitary development, and maturation or maintenance of the overall structure of the nervous system. May function as a regulatory subunit of ion channels. This Homo sapiens (Human) protein is Neuronatin (NNAT).